A 341-amino-acid polypeptide reads, in one-letter code: MIELNQIVKRYKTKKQDVLAVDHVDLSIQSGSIFGVVGFSGAGKSTLIRLLNHLEQPTSGDVIIDGDTIGKLSKSDLRKKRQKVSMIFQHFNLLWSRTVLNNITFPLEIAGISRQEAKQRALELVELVGLKGREDAYPSELSGGQKQRVGIARALANEPSVLLCDEATSALDPQTTDEILELLLKIKEERNLTIVIITHEMHVIRRICDEVAVMENGKVIEQGKVSSVFENPQHDVTKRFVKDDLNDDFDESISELVSLNENDYVVRLNFTGNNATEPLVSYITKTHNLDVNILEANIKHTKDGSIGFLIIQFAVANSEKFEKFKNDLEAQHVSVEVVKHG.

An ABC transporter domain is found at 2–241; the sequence is IELNQIVKRY…PQHDVTKRFV (240 aa). Residue 38–45 coordinates ATP; sequence GFSGAGKS.

The protein belongs to the ABC transporter superfamily. Methionine importer (TC 3.A.1.24) family. The complex is composed of two ATP-binding proteins (MetN), two transmembrane proteins (MetI) and a solute-binding protein (MetQ).

The protein localises to the cell membrane. It carries out the reaction L-methionine(out) + ATP + H2O = L-methionine(in) + ADP + phosphate + H(+). The enzyme catalyses D-methionine(out) + ATP + H2O = D-methionine(in) + ADP + phosphate + H(+). Part of the ABC transporter complex MetNIQ involved in methionine import. Responsible for energy coupling to the transport system. The sequence is that of Methionine import ATP-binding protein MetN from Staphylococcus saprophyticus subsp. saprophyticus (strain ATCC 15305 / DSM 20229 / NCIMB 8711 / NCTC 7292 / S-41).